Here is a 24-residue protein sequence, read N- to C-terminus: Caerulein precursor fragment BM1 (24 aa).

As to expression, expressed by the skin glands.

It is found in the secreted. Its function is as follows. Antimicrobial peptide. In Xenopus boumbaensis (Mawa clawed frog), this protein is Caerulein precursor fragment BM1.